The following is a 223-amino-acid chain: Neurotrophic factor BDNF precursor form (223 aa).

Positions 1–5 (SCMKA) are cleaved as a signal peptide. Residues 6–114 (APMKEVSIRG…AANMSMRVRR (109 aa)) constitute a propeptide that is removed on maturation. The N-linked (GlcNAc...) asparagine glycan is linked to Asn107. 2 cysteine pairs are disulfide-bonded: Cys127–Cys194 and Cys172–Cys223.

Belongs to the NGF-beta family.

The protein resides in the secreted. In terms of biological role, promotes the survival of neuronal populations that are all located either in the central nervous system or directly connected to it. In Exiliboa placata (Oaxacan dwarf boa), this protein is Neurotrophic factor BDNF precursor form (BDNF).